Consider the following 211-residue polypeptide: Tudor-interacting repair regulator protein (211 aa).

Residues Lys10 and Lys151 each participate in a glycyl lysine isopeptide (Lys-Gly) (interchain with G-Cter in ubiquitin) cross-link. An interaction with PXN region spans residues 118–205 (TLEQLHAVEI…TEKQKKALEK (88 aa)).

Belongs to the Nudix hydrolase family. TIRR subfamily. In terms of assembly, homodimer. Interacts with TP53BP1 (via the Tudor-like domain); interaction is abolished following DNA damage and TP53BP1 phosphorylation by ATM. Interacts (via the cytoplasmic part) with SDC4. Interacts with TGFB1I1 and PXN.

Its subcellular location is the nucleus. Key regulator of TP53BP1 required to stabilize TP53BP1 and regulate its recruitment to chromatin. In absence of DNA damage, interacts with the tandem Tudor-like domain of TP53BP1, masking the region that binds histone H4 dimethylated at 'Lys-20' (H4K20me2), thereby preventing TP53BP1 recruitment to chromatin and maintaining TP53BP1 localization to the nucleus. Following DNA damage, ATM-induced phosphorylation of TP53BP1 and subsequent recruitment of RIF1 leads to dissociate NUDT16L1/TIRR from TP53BP1, unmasking the tandem Tudor-like domain and allowing recruitment of TP53BP1 to DNA double strand breaks (DSBs). Binds U8 snoRNA. The chain is Tudor-interacting repair regulator protein from Homo sapiens (Human).